A 291-amino-acid chain; its full sequence is MERKRWECPALPQGWEREEVPRRSGLSAGHRDVFYYSPSGKKFRSKPQLARYLGGSMDLSTFDFRTGKMLMSKMNKSRQRVRYDSSNQVKGKPDLNTALPVRQTASIFKQPVTKITNHPSNKVKSDPQKAVDQPRQLFWEKKLSGLNAFDIAEELVKTMDLPKGLQGVGPGCTDETLLSAIASALHTSTMPITGQLSAAVEKNPGVWLNTTQPLCKAFMVTDEDIRKQEELVQQVRKRLEEALMADMLAHVEELARDGEAPLDKACAEDDDEEDEEEEEEEPDPDPEMEHV.

One can recognise an MBD domain in the interval 1 to 72 (MERKRWECPA…DFRTGKMLMS (72 aa)). Residues 1–80 (MERKRWECPA…MSKMNKSRQR (80 aa)) form a required for interaction with MBD2 region. Ser56 carries the phosphoserine modification. The interval 60 to 80 (STFDFRTGKMLMSKMNKSRQR) is required for interaction with MBD3L2. Residue Lys73 forms a Glycyl lysine isopeptide (Lys-Gly) (interchain with G-Cter in SUMO2) linkage. A Phosphoserine modification is found at Ser85. Residues Lys90 and Lys92 each participate in a glycyl lysine isopeptide (Lys-Gly) (interchain with G-Cter in SUMO2) cross-link. Ser144 is subject to Phosphoserine. Residues 216 to 245 (KAFMVTDEDIRKQEELVQQVRKRLEEALMA) adopt a coiled-coil conformation. Over residues 254–267 (LARDGEAPLDKACA) the composition is skewed to basic and acidic residues. Positions 254–291 (LARDGEAPLDKACAEDDDEEDEEEEEEEPDPDPEMEHV) are disordered. Residues 268 to 291 (EDDDEEDEEEEEEEPDPDPEMEHV) are compositionally biased toward acidic residues.

In terms of assembly, heterodimer (via N-terminus) with MBD2. Component of the MeCP1 histone deacetylase complex. Component of the nucleosome remodeling and deacetylase (NuRD) repressor complex, composed of core proteins MTA1, MTA2, MTA3, RBBP4, RBBP7, HDAC1, HDAC2, MBD2, MBD3, and peripherally associated proteins CDK2AP1, CDK2AP2, GATAD2A, GATAD2B, CHD3, CHD4 and CHD5. The exact stoichiometry of the NuRD complex is unknown, and some subunits such as MBD2 and MBD3, GATAD2A and GATAD2B, and CHD3, CHD4 and CHD5 define mutually exclusive NuRD complexes. Interacts with MBD3L2 (via N-terminus); the interaction is direct. Interacts with BCL6. Interacts with CDK2AP1. Interacts with HDAC1. Interacts with MTA2. Interacts with DNMT1. Interacts with GATAD2A. Interacts with GATAD2B. Does not interact with PWWP2A. Does not interact with PWWP2B.

It localises to the nucleus. The protein resides in the chromosome. In terms of biological role, acts as a component of the histone deacetylase NuRD complex which participates in the remodeling of chromatin. Acts as transcriptional repressor and plays a role in gene silencing. Does not bind to methylated DNA by itself. Binds to a lesser degree DNA containing unmethylated CpG dinucleotides. Recruits histone deacetylases and DNA methyltransferases. This is Methyl-CpG-binding domain protein 3 (MBD3) from Homo sapiens (Human).